We begin with the raw amino-acid sequence, 178 residues long: Inorganic pyrophosphatase (178 aa).

Substrate contacts are provided by Lys-30, Arg-44, and Tyr-56. Mg(2+) is bound by residues Asp-66, Asp-71, and Asp-103. Residue Tyr-140 coordinates substrate.

It belongs to the PPase family. Homohexamer. Requires Mg(2+) as cofactor.

It is found in the cytoplasm. It carries out the reaction diphosphate + H2O = 2 phosphate + H(+). Functionally, catalyzes the hydrolysis of inorganic pyrophosphate (PPi) forming two phosphate ions. This Pyrococcus furiosus (strain ATCC 43587 / DSM 3638 / JCM 8422 / Vc1) protein is Inorganic pyrophosphatase.